A 62-amino-acid chain; its full sequence is DNA-directed RNA polymerase subunit Rpo10 (62 aa).

Zn(2+)-binding residues include cysteine 6, cysteine 9, cysteine 43, and cysteine 44.

It belongs to the archaeal Rpo10/eukaryotic RPB10 RNA polymerase subunit family. Part of the RNA polymerase complex. It depends on Zn(2+) as a cofactor.

Its subcellular location is the cytoplasm. The enzyme catalyses RNA(n) + a ribonucleoside 5'-triphosphate = RNA(n+1) + diphosphate. Its function is as follows. DNA-dependent RNA polymerase (RNAP) catalyzes the transcription of DNA into RNA using the four ribonucleoside triphosphates as substrates. This chain is DNA-directed RNA polymerase subunit Rpo10, found in Methanoculleus marisnigri (strain ATCC 35101 / DSM 1498 / JR1).